The primary structure comprises 324 residues: uncharacterized protein (324 aa).

This is an uncharacterized protein from Saccharomyces cerevisiae (strain ATCC 204508 / S288c) (Baker's yeast).